A 340-amino-acid chain; its full sequence is Thermopsin (340 aa).

Residues 1–28 form the signal peptide; the sequence is MNFKSICLIILLSALIIPYIPQNIYFFP. A propeptide spanning residues 29 to 41 is cleaved from the precursor; it reads HRNTTGATISSGL. Asparagine 31, asparagine 65, asparagine 85, asparagine 117, asparagine 148, asparagine 197, asparagine 277, asparagine 287, asparagine 327, and asparagine 334 each carry an N-linked (GlcNAc...) asparagine glycan.

This sequence belongs to the peptidase A5 family.

It is found in the secreted. The catalysed reaction is Specificity similar to pepsin A, prefers bulky hydrophobic side-chains on either side of the scissible bond.. In terms of biological role, may represent a new class of acid proteases. It digests proteins and peptides in acidic solution. This is Thermopsin (thpS) from Sulfolobus acidocaldarius (strain ATCC 33909 / DSM 639 / JCM 8929 / NBRC 15157 / NCIMB 11770).